The sequence spans 87 residues: Small ribosomal subunit protein uS17 (87 aa).

It belongs to the universal ribosomal protein uS17 family. In terms of assembly, part of the 30S ribosomal subunit.

Functionally, one of the primary rRNA binding proteins, it binds specifically to the 5'-end of 16S ribosomal RNA. This chain is Small ribosomal subunit protein uS17, found in Exiguobacterium sibiricum (strain DSM 17290 / CCUG 55495 / CIP 109462 / JCM 13490 / 255-15).